We begin with the raw amino-acid sequence, 206 residues long: Holliday junction branch migration complex subunit RuvA (206 aa).

The interval 1 to 64 is domain I; that stretch reads MIGKLKGTVD…EDQIRLFGFV (64 aa). A domain II region spans residues 65–143; the sequence is TEAEREWFRL…AFTAADPGLA (79 aa). The flexible linker stretch occupies residues 144 to 154; it reads RLAADVEATEA. Residues 154 to 206 form a domain III region; sequence AAGGALADAVSALVNLGYGQAQAHTAIAAAGRKAGEDATTETLIRLGLKELAK.

This sequence belongs to the RuvA family. As to quaternary structure, homotetramer. Forms an RuvA(8)-RuvB(12)-Holliday junction (HJ) complex. HJ DNA is sandwiched between 2 RuvA tetramers; dsDNA enters through RuvA and exits via RuvB. An RuvB hexamer assembles on each DNA strand where it exits the tetramer. Each RuvB hexamer is contacted by two RuvA subunits (via domain III) on 2 adjacent RuvB subunits; this complex drives branch migration. In the full resolvosome a probable DNA-RuvA(4)-RuvB(12)-RuvC(2) complex forms which resolves the HJ.

Its subcellular location is the cytoplasm. Functionally, the RuvA-RuvB-RuvC complex processes Holliday junction (HJ) DNA during genetic recombination and DNA repair, while the RuvA-RuvB complex plays an important role in the rescue of blocked DNA replication forks via replication fork reversal (RFR). RuvA specifically binds to HJ cruciform DNA, conferring on it an open structure. The RuvB hexamer acts as an ATP-dependent pump, pulling dsDNA into and through the RuvAB complex. HJ branch migration allows RuvC to scan DNA until it finds its consensus sequence, where it cleaves and resolves the cruciform DNA. This Azorhizobium caulinodans (strain ATCC 43989 / DSM 5975 / JCM 20966 / LMG 6465 / NBRC 14845 / NCIMB 13405 / ORS 571) protein is Holliday junction branch migration complex subunit RuvA.